Here is a 466-residue protein sequence, read N- to C-terminus: Na(+)/H(+) antiporter NhaA (466 aa).

Transmembrane regions (helical) follow at residues 32–52 (VGGVLLLLAAITALIWANVPA), 74–94 (LSVQHWAADGLLAVFFFVAGI), 111–131 (AALPVAAALCGMAVPALVYTL), 142–162 (GWAVPTATDIAFALAVLAVIG), 172–192 (FLLTLAVVDDLFAILIIAVFF), 195–215 (DLNFAALAGAVIGLAVFWLLL), 221–241 (GWYVYVPLALVIWGLMYNSGI), 280–300 (GLAVPLFALFSAGVVISGGAL), 310–330 (LGVVLGLVVGKAIGIFGGTWL), 348–368 (VFAVASLAGIGFTVSLLIGEL), and 379–399 (EVKAAVLTGSLLAALIATTLL).

It belongs to the NhaA Na(+)/H(+) (TC 2.A.33) antiporter family.

It localises to the cell membrane. It carries out the reaction Na(+)(in) + 2 H(+)(out) = Na(+)(out) + 2 H(+)(in). In terms of biological role, na(+)/H(+) antiporter that extrudes sodium in exchange for external protons. The protein is Na(+)/H(+) antiporter NhaA of Streptomyces avermitilis (strain ATCC 31267 / DSM 46492 / JCM 5070 / NBRC 14893 / NCIMB 12804 / NRRL 8165 / MA-4680).